We begin with the raw amino-acid sequence, 576 residues long: Glucose-6-phosphate 1-dehydrogenase 1, chloroplastic (576 aa).

Residues 1 to 50 (MATHSMIIPSPSSSSSSLATAASPFKETLPLFSRSLTFPRKSLFSQVRLR) constitute a chloroplast transit peptide. Residues 97–104 (GASGDLAK) and Arg-131 contribute to the NADP(+) site. Residues Cys-149 and Cys-157 are joined by a disulfide bond. Lys-234 provides a ligand contact to NADP(+). D-glucose 6-phosphate contacts are provided by residues Lys-234, 264–268 (HYLGK), Glu-302, and Asp-321. The active-site Proton acceptor is the His-326. Lys-419 provides a ligand contact to NADP(+). Lys-422 and Arg-427 together coordinate D-glucose 6-phosphate. NADP(+) contacts are provided by Arg-432 and Arg-461. Gln-463 is a binding site for D-glucose 6-phosphate. Residues 469–471 (YLR) and Arg-554 contribute to the NADP(+) site.

It belongs to the glucose-6-phosphate dehydrogenase family. In terms of assembly, forms homodimer. Interacts with G6PD2, G6PD3 and G6PD4. In terms of tissue distribution, expressed in leaves, stems, buds, flowers and siliques.

Its subcellular location is the plastid. The protein resides in the chloroplast stroma. The protein localises to the peroxisome. It catalyses the reaction D-glucose 6-phosphate + NADP(+) = 6-phospho-D-glucono-1,5-lactone + NADPH + H(+). It participates in carbohydrate degradation; pentose phosphate pathway; D-ribulose 5-phosphate from D-glucose 6-phosphate (oxidative stage): step 1/3. Regulated by metabolites. Post-translationally inactivated by cysteine-mediated redox modification via the ferredoxin-thioredoxin system in the light and this avoids futile cycles with photosynthetic CO2 fixation. Its function is as follows. Catalyzes the rate-limiting step of the oxidative pentose-phosphate pathway, which represents a route for the dissimilation of carbohydrates besides glycolysis. The main function of this enzyme is to provide reducing power (NADPH) and pentose phosphates for fatty acid and nucleic acid synthesis which are involved in membrane synthesis and cell division. The sequence is that of Glucose-6-phosphate 1-dehydrogenase 1, chloroplastic from Arabidopsis thaliana (Mouse-ear cress).